The sequence spans 527 residues: MRCKRCNGSNFERDEDTGNSYCGGCGTLREYDNYEAQLGGIRGPQGTYIRVGTIGRGSVLDYKDKKIYEANNLIEETTERLNLGNKTEVIKSMISKLTDGEFGQGEWFPILIGACCYAVVREEGKGVLSMEEVAYEVGCDLHQLGPMIKRVVDHLDLELREFDLVGLFTKTVTNSPRLTDVDRDKKEKIIKQGTFLMNCALKWFLSTGRRPMPLVVAVLAFVVQVNGVKVKIDDLAKDASVSLTTCKTRYKELSEKLVKVAEEVGLPWAKDVTVKNVLKHSGTLFALMEAKSMKKRKQGTGKELVRTDGFCVEDLVMDCLSKESMYCYDDDARQDTMSRYFDVEGERQLSLCNYDDNISENQLSTKYNEFEDRVCGGTLAKRSQGSSQSMWQRRSVFGMVSTENWWKGKSELSKRLLLKDLLEKDVGLEALPPSYIKGCVAVERRREKIKAAKLRINAIQHPSDNVSEGALSLELEHSKKKRKKGSEIDWEDLVIQTLVLHNVNEEEIEKGHYKTLLDLHVFNSGEV.

The TFIIB-type zinc-finger motif lies at 1-30 (MRCKRCNGSNFERDEDTGNSYCGGCGTLRE).

In terms of assembly, can form homodimer. Interacts with TBP2. Expressed in shoot apical meristems, root tips, primordia of lateral roots, inflorescences, developing pollen grains and embryos.

The protein localises to the nucleus. Its function is as follows. Plant-specific TFIIB-related protein that plays important roles in pollen germination and embryogenesis, possibly by regulating gene expression through interaction with TBP2 and the subunits of RNA polymerases. Binds double-stranded DNA in vitro. The protein is Plant-specific TFIIB-related protein PTF2 of Arabidopsis thaliana (Mouse-ear cress).